An 87-amino-acid polypeptide reads, in one-letter code: Small ribosomal subunit protein uS17 (87 aa).

It belongs to the universal ribosomal protein uS17 family. In terms of assembly, part of the 30S ribosomal subunit.

Functionally, one of the primary rRNA binding proteins, it binds specifically to the 5'-end of 16S ribosomal RNA. The chain is Small ribosomal subunit protein uS17 from Staphylococcus carnosus (strain TM300).